We begin with the raw amino-acid sequence, 406 residues long: Phosphopentomutase (406 aa).

Mn(2+) contacts are provided by aspartate 10, aspartate 305, histidine 310, aspartate 346, histidine 347, and histidine 358.

The protein belongs to the phosphopentomutase family. Mn(2+) is required as a cofactor.

Its subcellular location is the cytoplasm. The enzyme catalyses 2-deoxy-alpha-D-ribose 1-phosphate = 2-deoxy-D-ribose 5-phosphate. The catalysed reaction is alpha-D-ribose 1-phosphate = D-ribose 5-phosphate. It functions in the pathway carbohydrate degradation; 2-deoxy-D-ribose 1-phosphate degradation; D-glyceraldehyde 3-phosphate and acetaldehyde from 2-deoxy-alpha-D-ribose 1-phosphate: step 1/2. In terms of biological role, isomerase that catalyzes the conversion of deoxy-ribose 1-phosphate (dRib-1-P) and ribose 1-phosphate (Rib-1-P) to deoxy-ribose 5-phosphate (dRib-5-P) and ribose 5-phosphate (Rib-5-P), respectively. The sequence is that of Phosphopentomutase from Aliivibrio fischeri (strain MJ11) (Vibrio fischeri).